We begin with the raw amino-acid sequence, 615 residues long: Hypermethylated in cancer 2 protein (615 aa).

The BTB domain occupies 46 to 109; the sequence is CDVIIMVENS…IYTGKLLPSD (64 aa). The interval 144–167 is disordered; that stretch reads KPFGSGRAGSTGMGRPPRSQRLST. Phosphoserine is present on residues Ser-166, Ser-169, and Ser-197. Disordered stretches follow at residues 182 to 208 and 229 to 421; these read RKGA…GSNQ and GCSS…SGHA. Positions 246-250 are binding to CtBP; that stretch reads GLDLS. Residues 280–296 are compositionally biased toward low complexity; sequence SPPAASAPPVANSASYS. Residues 336–356 show a composition bias toward basic and acidic residues; the sequence is KKEWGKKEPVAGSPFERREAG. Ser-348 is modified (phosphoserine). The segment covering 379–388 has biased composition (low complexity); sequence ASGAGPSGPY. Position 412 is a phosphoserine (Ser-412). 5 C2H2-type zinc fingers span residues 442–469, 505–532, 533–560, 561–588, and 589–615; these read YVCI…EEEL, FKCS…LTRP, FPCN…GLKP, FACD…GEKP, and YECQ…TSPS.

Belongs to the krueppel C2H2-type zinc-finger protein family. Hic subfamily. As to quaternary structure, self-associates. Interacts with HIC1. As to expression, highest levels in cerebellum.

The protein resides in the nucleus. In terms of biological role, transcriptional repressor. This Homo sapiens (Human) protein is Hypermethylated in cancer 2 protein (HIC2).